Here is a 139-residue protein sequence, read N- to C-terminus: Plastocyanin (139 aa).

An N-terminal signal peptide occupies residues 1–34 (MKLISASLRRFSLAVLTILLVVSSFAVFTPSASA). A Plastocyanin-like domain is found at 35–139 (ETYQVKLGTD…GMVGTITVQG (105 aa)). Cu cation-binding residues include histidine 73, cysteine 123, histidine 126, and methionine 131.

Belongs to the plastocyanin family. The cofactor is Cu(2+).

The protein localises to the cellular thylakoid membrane. In terms of biological role, participates in electron transfer between P700 and the cytochrome b6-f complex in photosystem I. The protein is Plastocyanin of Nostoc punctiforme (strain ATCC 29133 / PCC 73102).